A 988-amino-acid chain; its full sequence is Exportin-T (988 aa).

The protein belongs to the exportin family. In terms of tissue distribution, expressed in young leaves, growing leaf blades, young floral organs and root tips.

The protein localises to the nucleus. The protein resides in the cytoplasm. Probable tRNA nucleus export receptor which regulates tRNA processing and facilitates tRNA translocation across the nuclear pore complex. Is required for proper activity of the shoot apical meristem (SAM) and correct leaf initiation at different developmental stages, and may play a role in floral patterning. The chain is Exportin-T (PSD) from Arabidopsis thaliana (Mouse-ear cress).